The following is a 335-amino-acid chain: Casein kinase I (335 aa).

Residues 9-278 (YRLGRKIGSG…LRRLFKDLFF (270 aa)) form the Protein kinase domain. Residues 15-23 (IGSGSFGDI) and K38 each bind ATP. D128 functions as the Proton acceptor in the catalytic mechanism. Residues 304 to 335 (RSMVNQGAESGNQWRRDASGRDPLGRLPQLEP) form a disordered region. Over residues 305-316 (SMVNQGAESGNQ) the composition is skewed to polar residues. A compositionally biased stretch (basic and acidic residues) spans 317–327 (WRRDASGRDPL).

Belongs to the protein kinase superfamily. CK1 Ser/Thr protein kinase family. Casein kinase I subfamily.

The catalysed reaction is L-seryl-[protein] + ATP = O-phospho-L-seryl-[protein] + ADP + H(+). It catalyses the reaction L-threonyl-[protein] + ATP = O-phospho-L-threonyl-[protein] + ADP + H(+). Functionally, casein kinases are operationally defined by their preferential utilization of acidic proteins such as caseins as substrates. It can phosphorylate a large number of proteins. In Eimeria tenella (Coccidian parasite), this protein is Casein kinase I.